We begin with the raw amino-acid sequence, 292 residues long: Pyridoxal 5'-phosphate synthase subunit PdxS (292 aa).

Residue Asp-22 coordinates D-ribose 5-phosphate. The Schiff-base intermediate with D-ribose 5-phosphate role is filled by Lys-79. Residue Gly-151 coordinates D-ribose 5-phosphate. Arg-163 contributes to the D-glyceraldehyde 3-phosphate binding site. D-ribose 5-phosphate contacts are provided by residues Gly-212 and Gly-233–Ser-234.

Belongs to the PdxS/SNZ family. In terms of assembly, in the presence of PdxT, forms a dodecamer of heterodimers.

The enzyme catalyses aldehydo-D-ribose 5-phosphate + D-glyceraldehyde 3-phosphate + L-glutamine = pyridoxal 5'-phosphate + L-glutamate + phosphate + 3 H2O + H(+). It participates in cofactor biosynthesis; pyridoxal 5'-phosphate biosynthesis. Its function is as follows. Catalyzes the formation of pyridoxal 5'-phosphate from ribose 5-phosphate (RBP), glyceraldehyde 3-phosphate (G3P) and ammonia. The ammonia is provided by the PdxT subunit. Can also use ribulose 5-phosphate and dihydroxyacetone phosphate as substrates, resulting from enzyme-catalyzed isomerization of RBP and G3P, respectively. This Caldanaerobacter subterraneus subsp. tengcongensis (strain DSM 15242 / JCM 11007 / NBRC 100824 / MB4) (Thermoanaerobacter tengcongensis) protein is Pyridoxal 5'-phosphate synthase subunit PdxS.